Here is a 349-residue protein sequence, read N- to C-terminus: UDP-3-O-acylglucosamine N-acyltransferase (349 aa).

Residue histidine 246 is the Proton acceptor of the active site.

It belongs to the transferase hexapeptide repeat family. LpxD subfamily. Homotrimer.

The enzyme catalyses a UDP-3-O-[(3R)-3-hydroxyacyl]-alpha-D-glucosamine + a (3R)-hydroxyacyl-[ACP] = a UDP-2-N,3-O-bis[(3R)-3-hydroxyacyl]-alpha-D-glucosamine + holo-[ACP] + H(+). The protein operates within bacterial outer membrane biogenesis; LPS lipid A biosynthesis. Its function is as follows. Catalyzes the N-acylation of UDP-3-O-acylglucosamine using 3-hydroxyacyl-ACP as the acyl donor. Is involved in the biosynthesis of lipid A, a phosphorylated glycolipid that anchors the lipopolysaccharide to the outer membrane of the cell. The sequence is that of UDP-3-O-acylglucosamine N-acyltransferase from Nostoc sp. (strain PCC 7120 / SAG 25.82 / UTEX 2576).